The primary structure comprises 453 residues: Pup--protein ligase (453 aa).

Glu-9 is a Mg(2+) binding site. An ATP-binding site is contributed by Arg-53. Tyr-55 is a Mg(2+) binding site. Residue Asp-57 is the Proton acceptor of the active site. A Mg(2+)-binding site is contributed by Glu-63. Positions 66 and 420 each coordinate ATP.

It belongs to the Pup ligase/Pup deamidase family. Pup-conjugating enzyme subfamily.

It carries out the reaction ATP + [prokaryotic ubiquitin-like protein]-L-glutamate + [protein]-L-lysine = ADP + phosphate + N(6)-([prokaryotic ubiquitin-like protein]-gamma-L-glutamyl)-[protein]-L-lysine.. It participates in protein degradation; proteasomal Pup-dependent pathway. The protein operates within protein modification; protein pupylation. In terms of biological role, catalyzes the covalent attachment of the prokaryotic ubiquitin-like protein modifier Pup to the proteasomal substrate proteins, thereby targeting them for proteasomal degradation. This tagging system is termed pupylation. The ligation reaction involves the side-chain carboxylate of the C-terminal glutamate of Pup and the side-chain amino group of a substrate lysine. In Streptomyces griseus subsp. griseus (strain JCM 4626 / CBS 651.72 / NBRC 13350 / KCC S-0626 / ISP 5235), this protein is Pup--protein ligase.